Here is a 780-residue protein sequence, read N- to C-terminus: WD repeat-containing protein 27 (780 aa).

WD repeat units lie at residues 3 to 56 (TPPE…VWSS), 61 to 100 (HQLLTLQGHHQLITAVVFGNQIDPLLLCSASEDYIIMWNV), 111 to 150 (LTPRGTILGSLLQTVLCLRFSLDDRAIAVCAGNKISVMDV), 154 to 193 (SVLVELKGHQGSVTAVEFCPWQAHTLISVSEDRSFKVWDF), 200 to 236 (YSSSILTAYPLLNLLINEENQQLVTGSADGQLWIFSL), 291 to 335 (FPIL…LASF), 342 to 385 (HFKE…VLEI), 500 to 540 (NLSR…VFNA), 544 to 582 (GPPAAFSGHDGAVSTICWSHDKRWLLSTGRDRTLRVWSV), 588 to 639 (MLLL…RYKP), 644 to 685 (KPIF…VFDL), 691 to 738 (AAVL…LWDL), and 752 to 779 (AFCTVLQDTQIRLLKWPSTQQLLSLSQP).

The protein is WD repeat-containing protein 27 (Wdr27) of Mus musculus (Mouse).